We begin with the raw amino-acid sequence, 502 residues long: ATP synthase subunit alpha (502 aa).

ATP is bound at residue 169-176; sequence GDRQTGKT.

The protein belongs to the ATPase alpha/beta chains family. In terms of assembly, F-type ATPases have 2 components, CF(1) - the catalytic core - and CF(0) - the membrane proton channel. CF(1) has five subunits: alpha(3), beta(3), gamma(1), delta(1), epsilon(1). CF(0) has three main subunits: a(1), b(2) and c(9-12). The alpha and beta chains form an alternating ring which encloses part of the gamma chain. CF(1) is attached to CF(0) by a central stalk formed by the gamma and epsilon chains, while a peripheral stalk is formed by the delta and b chains.

Its subcellular location is the cell inner membrane. The enzyme catalyses ATP + H2O + 4 H(+)(in) = ADP + phosphate + 5 H(+)(out). Its function is as follows. Produces ATP from ADP in the presence of a proton gradient across the membrane. The alpha chain is a regulatory subunit. This is ATP synthase subunit alpha from Citrifermentans bemidjiense (strain ATCC BAA-1014 / DSM 16622 / JCM 12645 / Bem) (Geobacter bemidjiensis).